Here is a 336-residue protein sequence, read N- to C-terminus: MTTDDTRPIAVLGAGSYGTALAIALARNGQRTHLWGHNPDKMVKMAEQRMNTESLPAIPFPNALIIEKVLAHTLQQAQDILIVVPSHAFADILHQIKPLLTTQHRIMWATKGLEHNTGRLLQTVATEIIGEQHPFAVLSGPTFAKELALGLPTAITLASHDAKFADEMQQRIHCSKAFRVYLNTDMIGVQLGGAIKNVIAIGAGISDGMGFGANARTALITRGLAEISRLGESLGANPKTFMGMAGLGDLVLTCTDNQSRNRRFGLALGQGKSAEQAIAEIGQVVEGFYNTKETYLLAQRQNIEMPIVEQIYQMLFCNKNANDVVTSLLERQRKKE.

NADPH contacts are provided by Ser-16, Tyr-17, His-37, and Lys-111. Sn-glycerol 3-phosphate is bound by residues Lys-111, Gly-140, and Thr-142. Residue Ala-144 participates in NADPH binding. Lys-196, Asp-249, Ser-259, Arg-260, and Asn-261 together coordinate sn-glycerol 3-phosphate. Lys-196 functions as the Proton acceptor in the catalytic mechanism. Arg-260 lines the NADPH pocket. NADPH is bound by residues Val-284 and Glu-286.

It belongs to the NAD-dependent glycerol-3-phosphate dehydrogenase family.

The protein localises to the cytoplasm. The catalysed reaction is sn-glycerol 3-phosphate + NAD(+) = dihydroxyacetone phosphate + NADH + H(+). The enzyme catalyses sn-glycerol 3-phosphate + NADP(+) = dihydroxyacetone phosphate + NADPH + H(+). Its pathway is membrane lipid metabolism; glycerophospholipid metabolism. In terms of biological role, catalyzes the reduction of the glycolytic intermediate dihydroxyacetone phosphate (DHAP) to sn-glycerol 3-phosphate (G3P), the key precursor for phospholipid synthesis. This chain is Glycerol-3-phosphate dehydrogenase [NAD(P)+], found in Haemophilus ducreyi (strain 35000HP / ATCC 700724).